Here is a 122-residue protein sequence, read N- to C-terminus: uncharacterized protein (122 aa).

Helical transmembrane passes span 14 to 34 (WLWI…FNNV) and 83 to 103 (IIGV…YFII).

It localises to the cell membrane. This is an uncharacterized protein from Ureaplasma parvum serovar 3 (strain ATCC 700970).